The chain runs to 366 residues: Phosphate acyltransferase (366 aa).

Positions 334-366 (ESAKNKETQSKQASTKNTAPKTSETTKESQQSL) are disordered. Residues 343-366 (SKQASTKNTAPKTSETTKESQQSL) show a composition bias toward polar residues.

It belongs to the PlsX family. In terms of assembly, homodimer. Probably interacts with PlsY.

It is found in the cytoplasm. It carries out the reaction a fatty acyl-[ACP] + phosphate = an acyl phosphate + holo-[ACP]. It functions in the pathway lipid metabolism; phospholipid metabolism. Catalyzes the reversible formation of acyl-phosphate (acyl-PO(4)) from acyl-[acyl-carrier-protein] (acyl-ACP). This enzyme utilizes acyl-ACP as fatty acyl donor, but not acyl-CoA. The sequence is that of Phosphate acyltransferase from Onion yellows phytoplasma (strain OY-M).